A 128-amino-acid polypeptide reads, in one-letter code: uncharacterized protein (128 aa).

2 consecutive transmembrane segments (helical) span residues 45–65 (GYFH…LFPF) and 95–115 (FMSH…LSCF).

It localises to the membrane. This is an uncharacterized protein from Saccharomyces cerevisiae (strain ATCC 204508 / S288c) (Baker's yeast).